The following is a 163-amino-acid chain: Phosphopantetheine adenylyltransferase (163 aa).

Substrate is bound at residue threonine 10. ATP contacts are provided by residues 10–11 (TF) and histidine 18. Substrate contacts are provided by lysine 42, leucine 74, and arginine 88. Residues 89-91 (GLR), glutamate 99, and 124-130 (NSFISST) each bind ATP.

Belongs to the bacterial CoaD family. As to quaternary structure, homohexamer. Mg(2+) is required as a cofactor.

Its subcellular location is the cytoplasm. The catalysed reaction is (R)-4'-phosphopantetheine + ATP + H(+) = 3'-dephospho-CoA + diphosphate. Its pathway is cofactor biosynthesis; coenzyme A biosynthesis; CoA from (R)-pantothenate: step 4/5. Its function is as follows. Reversibly transfers an adenylyl group from ATP to 4'-phosphopantetheine, yielding dephospho-CoA (dPCoA) and pyrophosphate. The chain is Phosphopantetheine adenylyltransferase from Shewanella putrefaciens (strain CN-32 / ATCC BAA-453).